The sequence spans 1127 residues: Inactive phospholipase C-like protein 2 (1127 aa).

The segment covering 1-11 (MAECGRGGAAG) has biased composition (gly residues). Residues 1 to 128 (MAECGRGGAA…KKTVSFSSMP (128 aa)) are disordered. Residue A2 is modified to N-acetylalanine. S17 is modified (phosphoserine). A compositionally biased stretch (low complexity) spans 19–31 (GPALGAKGALKAG). Positions 32-42 (VGEGGGGGGRL) are enriched in gly residues. T84 bears the Phosphothreonine mark. The PH domain occupies 141–251 (NSMVEGSELK…WVTGLRYLIS (111 aa)). Positions 426 to 570 (QDMKQPLSHY…LKGKILIKAK (145 aa)) constitute a PI-PLC X-box domain. T584 is modified (phosphothreonine). The region spanning 618 to 734 (LSELVSICKS…GYVLRPAIMR (117 aa)) is the PI-PLC Y-box domain. The C2 domain maps to 734 to 863 (REEVSFFSAN…TGYRHVPLQS (130 aa)). Positions 1101–1127 (GTENADVQKPRRSLEVIPEKANDETGE) are disordered. Residues 1106–1127 (DVQKPRRSLEVIPEKANDETGE) show a composition bias toward basic and acidic residues. A Phosphoserine modification is found at S1113.

The protein localises to the cytoplasm. May play an role in the regulation of Ins(1,4,5)P3 around the endoplasmic reticulum. This Homo sapiens (Human) protein is Inactive phospholipase C-like protein 2 (PLCL2).